The sequence spans 36 residues: Pancreatic polypeptide (36 aa).

Phenylalanine amide is present on F36.

This sequence belongs to the NPY family.

The protein localises to the secreted. In terms of biological role, hormone secreted by pancreatic cells that acts as a regulator of pancreatic and gastrointestinal functions. The sequence is that of Pancreatic polypeptide (ppy) from Alligator mississippiensis (American alligator).